A 150-amino-acid chain; its full sequence is Meiotically up-regulated gene 108 protein (150 aa).

Over residues 1-11 (MANRFTSSDQT) the composition is skewed to polar residues. The segment at 1 to 150 (MANRFTSSDQ…RDISLLGSTI (150 aa)) is disordered. Positions 12–23 (QETHGHHVDKHS) are enriched in basic and acidic residues. Positions 83–93 (NRSSQHTGRVN) are enriched in polar residues.

It localises to the cytoplasm. It is found in the nucleus. In terms of biological role, has a role in meiosis. This chain is Meiotically up-regulated gene 108 protein (mug108), found in Schizosaccharomyces pombe (strain 972 / ATCC 24843) (Fission yeast).